The chain runs to 116 residues: Protein Rev (116 aa).

At Ser8 the chain carries Phosphoserine; by host CK2. The homomultimerization stretch occupies residues 18–26; sequence IIKILYQSN. Disordered regions lie at residues 25 to 49 and 82 to 116; these read SNPY…RARQ and SLNC…GDKE. The short motif at 34-50 is the Nuclear localization signal and RNA-binding (RRE) element; the sequence is TRQARRNRRRRWRARQR. Residues 36-49 show a composition bias toward basic residues; the sequence is QARRNRRRRWRARQ. The Nuclear export signal and binding to XPO1 motif lies at 73–84; sequence LQLPPLERLSLN. Position 99 is a phosphoserine; by host (Ser99).

It belongs to the HIV-1 REV protein family. In terms of assembly, homomultimer; when bound to the RRE. Multimeric assembly is essential for activity and may involve XPO1. Binds to human KPNB1, XPO1, TNPO1, RANBP5 and IPO7. Interacts with the viral Integrase. Interacts with human KHDRBS1. Interacts with human NAP1; this interaction decreases Rev multimerization and stimulates its activity. Interacts with human DEAD-box helicases DDX3 and DDX24; these interactions may serve for viral RNA export to the cytoplasm and packaging, respectively. Interacts with human PSIP1; this interaction may inhibit HIV-1 DNA integration by promoting dissociation of the Integrase-LEDGF/p75 complex. Asymmetrically arginine dimethylated at one site by host PRMT6. Methylation impairs the RNA-binding activity and export of viral RNA from the nucleus to the cytoplasm. In terms of processing, phosphorylated by protein kinase CK2. Presence of, and maybe binding to the N-terminus of the regulatory beta subunit of CK2 is necessary for CK2-mediated Rev's phosphorylation.

It localises to the host nucleus. The protein resides in the host nucleolus. The protein localises to the host cytoplasm. Escorts unspliced or incompletely spliced viral pre-mRNAs (late transcripts) out of the nucleus of infected cells. These pre-mRNAs carry a recognition sequence called Rev responsive element (RRE) located in the env gene, that is not present in fully spliced viral mRNAs (early transcripts). This function is essential since most viral proteins are translated from unspliced or partially spliced pre-mRNAs which cannot exit the nucleus by the pathway used by fully processed cellular mRNAs. Rev itself is translated from a fully spliced mRNA that readily exits the nucleus. Rev's nuclear localization signal (NLS) binds directly to KPNB1/Importin beta-1 without previous binding to KPNA1/Importin alpha-1. KPNB1 binds to the GDP bound form of RAN (Ran-GDP) and targets Rev to the nucleus. In the nucleus, the conversion from Ran-GDP to Ran-GTP dissociates Rev from KPNB1 and allows Rev's binding to the RRE in viral pre-mRNAs. Rev multimerization on the RRE via cooperative assembly exposes its nuclear export signal (NES) to the surface. Rev can then form a complex with XPO1/CRM1 and Ran-GTP, leading to nuclear export of the complex. Conversion from Ran-GTP to Ran-GDP mediates dissociation of the Rev/RRE/XPO1/RAN complex, so that Rev can return to the nucleus for a subsequent round of export. Beside KPNB1, also seems to interact with TNPO1/Transportin-1, RANBP5/IPO5 and IPO7/RANBP7 for nuclear import. The nucleoporin-like HRB/RIP is an essential cofactor that probably indirectly interacts with Rev to release HIV RNAs from the perinuclear region to the cytoplasm. The sequence is that of Protein Rev from Human immunodeficiency virus type 1 group M subtype K (isolate 97ZR-EQTB11) (HIV-1).